A 300-amino-acid polypeptide reads, in one-letter code: Glycine--tRNA ligase alpha subunit (300 aa).

This sequence belongs to the class-II aminoacyl-tRNA synthetase family. Tetramer of two alpha and two beta subunits.

It localises to the cytoplasm. The enzyme catalyses tRNA(Gly) + glycine + ATP = glycyl-tRNA(Gly) + AMP + diphosphate. The protein is Glycine--tRNA ligase alpha subunit of Prochlorococcus marinus (strain MIT 9313).